Consider the following 160-residue polypeptide: Ribosomal RNA large subunit methyltransferase H (160 aa).

S-adenosyl-L-methionine contacts are provided by residues G108 and 127–132 (FGLMTW).

Belongs to the RNA methyltransferase RlmH family. Homodimer.

The protein localises to the cytoplasm. It catalyses the reaction pseudouridine(1915) in 23S rRNA + S-adenosyl-L-methionine = N(3)-methylpseudouridine(1915) in 23S rRNA + S-adenosyl-L-homocysteine + H(+). Specifically methylates the pseudouridine at position 1915 (m3Psi1915) in 23S rRNA. This is Ribosomal RNA large subunit methyltransferase H from Bartonella bacilliformis (strain ATCC 35685 / KC583 / Herrer 020/F12,63).